The following is a 359-amino-acid chain: Biotin synthase (359 aa).

The region spanning C67 to R302 is the Radical SAM core domain. C85, C89, and C92 together coordinate [4Fe-4S] cluster. Residues C130, C167, C227, and R297 each contribute to the [2Fe-2S] cluster site.

It belongs to the radical SAM superfamily. Biotin synthase family. In terms of assembly, homodimer. The cofactor is [4Fe-4S] cluster. [2Fe-2S] cluster is required as a cofactor.

The catalysed reaction is (4R,5S)-dethiobiotin + (sulfur carrier)-SH + 2 reduced [2Fe-2S]-[ferredoxin] + 2 S-adenosyl-L-methionine = (sulfur carrier)-H + biotin + 2 5'-deoxyadenosine + 2 L-methionine + 2 oxidized [2Fe-2S]-[ferredoxin]. It participates in cofactor biosynthesis; biotin biosynthesis; biotin from 7,8-diaminononanoate: step 2/2. Functionally, catalyzes the conversion of dethiobiotin (DTB) to biotin by the insertion of a sulfur atom into dethiobiotin via a radical-based mechanism. The sequence is that of Biotin synthase from Gloeothece citriformis (strain PCC 7424) (Cyanothece sp. (strain PCC 7424)).